The sequence spans 379 residues: Flap endonuclease 1 (379 aa).

The segment at 1–105 is N-domain; it reads MGVKGLNQLI…GELEKRLLRR (105 aa). Residue Asp34 coordinates Mg(2+). 2 residues coordinate DNA: Arg47 and Arg71. Mg(2+)-binding residues include Asp87, Glu159, Glu161, Asp180, and Asp182. The tract at residues 123-254 is I-domain; that stretch reads DMVRYEKRTV…VTAFKLIKEH (132 aa). Position 159 (Glu159) interacts with DNA. DNA is bound by residues Gly232 and Asp234. Asp234 contributes to the Mg(2+) binding site. Residues 341-349 are interaction with PCNA; sequence VQGRLDGFF. Residues 344–379 form a disordered region; it reads RLDGFFQSVPKPKDSADKKRKNDTKSAKSKKAKTRK. The segment covering 361–379 has biased composition (basic residues); sequence KKRKNDTKSAKSKKAKTRK.

It belongs to the XPG/RAD2 endonuclease family. FEN1 subfamily. In terms of assembly, interacts with PCNA. Three molecules of FEN1 bind to one PCNA trimer with each molecule binding to one PCNA monomer. PCNA stimulates the nuclease activity without altering cleavage specificity. Mg(2+) serves as cofactor. Phosphorylated. Phosphorylation upon DNA damage induces relocalization to the nuclear plasma.

It is found in the nucleus. The protein resides in the nucleolus. Its subcellular location is the nucleoplasm. It localises to the mitochondrion. In terms of biological role, structure-specific nuclease with 5'-flap endonuclease and 5'-3' exonuclease activities involved in DNA replication and repair. During DNA replication, cleaves the 5'-overhanging flap structure that is generated by displacement synthesis when DNA polymerase encounters the 5'-end of a downstream Okazaki fragment. It enters the flap from the 5'-end and then tracks to cleave the flap base, leaving a nick for ligation. Also involved in the long patch base excision repair (LP-BER) pathway, by cleaving within the apurinic/apyrimidinic (AP) site-terminated flap. Acts as a genome stabilization factor that prevents flaps from equilibrating into structures that lead to duplications and deletions. Also possesses 5'-3' exonuclease activity on nicked or gapped double-stranded DNA, and exhibits RNase H activity. Also involved in replication and repair of rDNA and in repairing mitochondrial DNA. The protein is Flap endonuclease 1 of Debaryomyces hansenii (strain ATCC 36239 / CBS 767 / BCRC 21394 / JCM 1990 / NBRC 0083 / IGC 2968) (Yeast).